Here is an 89-residue protein sequence, read N- to C-terminus: Acylphosphatase (89 aa).

The Acylphosphatase-like domain maps to 3 to 88 (TLHLQIEGRV…GEYSGFEKRS (86 aa)). Residues Arg-18 and Asn-36 contribute to the active site.

The protein belongs to the acylphosphatase family.

It catalyses the reaction an acyl phosphate + H2O = a carboxylate + phosphate + H(+). The protein is Acylphosphatase (acyP) of Thiobacillus denitrificans (strain ATCC 25259 / T1).